We begin with the raw amino-acid sequence, 766 residues long: Serine/threonine-protein kinase PLK4 (766 aa).

Residues 14–267 form the Protein kinase domain; it reads YEVQHLLGKG…LEAVLCHPFM (254 aa). Residues 20-28 and Lys43 each bind ATP; that span reads LGKGGFAIV. Catalysis depends on Asp138, which acts as the Proton acceptor. The Cryptic POLO box 1 (CPB1) domain occupies 379-496; the sequence is EDRISVPPLN…ARFVGLVKSK (118 aa). Residues 497–600 enclose the Cryptic POLO box 2 (CPB2) domain; the sequence is TPKVTYFSTL…GRRPVTDVQP (104 aa). Residues 658 to 737 enclose the POLO box domain; sequence PIKRINVPDV…IPNIQIKLKT (80 aa).

It belongs to the protein kinase superfamily. Ser/Thr protein kinase family. CDC5/Polo subfamily. Homodimer. In terms of processing, ubiquitinated by the SCF(Slimb) ubiquitin ligase complex; leading to its degradation by the proteasome during interphase and regulating centriole number and ensuring the block to centriole reduplication.

Its subcellular location is the cytoplasm. The protein resides in the cytoskeleton. It is found in the microtubule organizing center. The protein localises to the centrosome. It localises to the centriole. The catalysed reaction is L-seryl-[protein] + ATP = O-phospho-L-seryl-[protein] + ADP + H(+). It carries out the reaction L-threonyl-[protein] + ATP = O-phospho-L-threonyl-[protein] + ADP + H(+). Functionally, serine/threonine-protein kinase that plays a central role in centriole duplication. Able to trigger procentriole formation on the surface of the mother centriole cylinder, using mother centriole as a platform, leading to the recruitment of centriole biogenesis proteins such as sas-6. When overexpressed, it is able to induce centrosome amplification through the simultaneous generation of multiple procentrioles adjoining each parental centriole during S phase. Centrosome amplification following overexpression can initiate tumorigenesis, highlighting the importance of centrosome regulation in cancers. This chain is Serine/threonine-protein kinase PLK4 (SAK), found in Drosophila yakuba (Fruit fly).